The primary structure comprises 1104 residues: Extended synaptotagmin-1 (1104 aa).

M1 is modified (N-acetylmethionine). The Cytoplasmic portion of the chain corresponds to 1–38 (MERSPGEGPSPSPMDQPSAPSDPTDQPPAAHAKPDPGS). Residues 1 to 48 (MERSPGEGPSPSPMDQPSAPSDPTDQPPAAHAKPDPGSGGQPAGPGAA) form a disordered region. Residues 37–47 (GSGGQPAGPGA) are compositionally biased toward gly residues. The chain crosses the membrane as a helical span at residues 39 to 59 (GGQPAGPGAAGEALAVLTSFG). Residues 60–62 (RRL) lie on the Lumenal side of the membrane. A helical membrane pass occupies residues 63 to 83 (LVLIPVYLAGAVGLSVGFVLF). Residues 84–1104 (GLALYLGWRR…LMDNKDKGSS (1021 aa)) are Cytoplasmic-facing. The stretch at 91-116 (WRRVRDEKERSLRAARQLLDDEEQLT) forms a coiled coil. The SMP-LTD domain occupies 135–313 (DVEKAEWLNK…LPNRLLVPLV (179 aa)). C2 domains are found at residues 312 to 433 (LVPD…DDWF), 460 to 580 (QVLQ…QLSS), 627 to 751 (SVDA…DEWL), and 777 to 899 (LEEV…TLSS). S324 is subject to Phosphoserine; by CDK5. K344, D345, D357, D404, D406, D408, D410, and D411 together coordinate Ca(2+). The interval 617 to 641 (VDSENPQRGSSVDAPPRPCHTTPDS) is disordered. K817 carries the post-translational modification N6-acetyllysine. Residues S820 and S941 each carry the phosphoserine modification. Residues 924–950 (SHSYSHSSSSLSEEPELSGGPPHITSS) form a disordered region. Residues 925–946 (HSYSHSSSSLSEEPELSGGPPH) show a composition bias toward low complexity. Position 948 is a phosphothreonine (T948). Phosphoserine occurs at positions 949 and 963. The C2 5 domain occupies 971–1093 (PLGQVKLTLW…DLSQGVARWY (123 aa)). Residue Y1009 is modified to Phosphotyrosine. Residues 1018–1025 (KNRGTKRR) form a required for phosphatidylinositol 4,5-bisphosphate-dependent location at the cell membrane region. At S1034 the chain carries Phosphoserine.

The protein belongs to the extended synaptotagmin family. Interacts with ESYT2 and ESYT3. Interacts with ADGRD1; inhibiting the G-protein-coupled receptor activity of ADGRD1. Interaction with ADGRD1 is abolished when cytosolic calcium increases, relieving ADGRD1 G-protein-coupled receptor activity. Interacts (phosphorylated form) with SLC2A4. Post-translationally, phosphorylated on Ser residues in insulin-treated adipocytes (in vitro); this promotes interaction with SLC2A4. Widely expressed.

It is found in the endoplasmic reticulum membrane. It localises to the cell membrane. Its function is as follows. Binds calcium (via the C2 domains) and translocates to sites of contact between the endoplasmic reticulum and the cell membrane in response to increased cytosolic calcium levels. Helps tether the endoplasmic reticulum to the cell membrane and promotes the formation of appositions between the endoplasmic reticulum and the cell membrane. Acts as an inhibitor of ADGRD1 G-protein-coupled receptor activity in absence of cytosolic calcium. Binds glycerophospholipids in a barrel-like domain and may play a role in cellular lipid transport. This chain is Extended synaptotagmin-1, found in Homo sapiens (Human).